The sequence spans 159 residues: Cyclic pyranopterin monophosphate synthase (159 aa).

Substrate contacts are provided by residues Leu76–His78 and Met114–Glu115. Residue Asp129 is part of the active site.

It belongs to the MoaC family. In terms of assembly, homohexamer; trimer of dimers.

It carries out the reaction (8S)-3',8-cyclo-7,8-dihydroguanosine 5'-triphosphate = cyclic pyranopterin phosphate + diphosphate. It functions in the pathway cofactor biosynthesis; molybdopterin biosynthesis. Functionally, catalyzes the conversion of (8S)-3',8-cyclo-7,8-dihydroguanosine 5'-triphosphate to cyclic pyranopterin monophosphate (cPMP). The polypeptide is Cyclic pyranopterin monophosphate synthase (Clostridium botulinum (strain Alaska E43 / Type E3)).